The primary structure comprises 333 residues: Adenosine deaminase (333 aa).

2 residues coordinate Zn(2+): histidine 12 and histidine 14. Histidine 14, aspartate 16, and glycine 170 together coordinate substrate. Histidine 197 serves as a coordination point for Zn(2+). The Proton donor role is filled by glutamate 200. Aspartate 278 is a Zn(2+) binding site. Residue aspartate 279 participates in substrate binding.

Belongs to the metallo-dependent hydrolases superfamily. Adenosine and AMP deaminases family. Adenosine deaminase subfamily. Zn(2+) is required as a cofactor.

It catalyses the reaction adenosine + H2O + H(+) = inosine + NH4(+). It carries out the reaction 2'-deoxyadenosine + H2O + H(+) = 2'-deoxyinosine + NH4(+). Its function is as follows. Catalyzes the hydrolytic deamination of adenosine and 2-deoxyadenosine. The chain is Adenosine deaminase from Klebsiella pneumoniae subsp. pneumoniae (strain ATCC 700721 / MGH 78578).